The sequence spans 88 residues: Small ribosomal subunit protein bS20 (88 aa).

The interval Met1–Met28 is disordered.

In terms of biological role, binds directly to 16S ribosomal RNA. This Rhodopseudomonas palustris (strain ATCC BAA-98 / CGA009) protein is Small ribosomal subunit protein bS20.